We begin with the raw amino-acid sequence, 208 residues long: MRGKFIVIEGLEGAGKSNAQRIVSETLAAHGIEFITTREPGGTPIAEALRNLWKEGEDGEHTTDKAEVLMIYAARIQLVETVIEPALASGKWVVGDRHNMSSQAYQGGGRGLAELVDEVGSAILGDFEPDFTIYLDIEPSIGLERARGRGALDRIEQLDIDFFHRTRERYVSLVKDNPKAVLINAEPAIEQVSADIQQAVEIFLTSEK.

Position 10–17 (10–17 (GLEGAGKS)) interacts with ATP.

This sequence belongs to the thymidylate kinase family.

The enzyme catalyses dTMP + ATP = dTDP + ADP. Functionally, phosphorylation of dTMP to form dTDP in both de novo and salvage pathways of dTTP synthesis. This chain is Thymidylate kinase, found in Glaesserella parasuis serovar 5 (strain SH0165) (Haemophilus parasuis).